The following is a 71-amino-acid chain: Large ribosomal subunit protein bL31 (71 aa).

The Zn(2+) site is built by Cys16, Cys18, Cys38, and Cys41.

This sequence belongs to the bacterial ribosomal protein bL31 family. Type A subfamily. In terms of assembly, part of the 50S ribosomal subunit. It depends on Zn(2+) as a cofactor.

Binds the 23S rRNA. The sequence is that of Large ribosomal subunit protein bL31 from Chromobacterium violaceum (strain ATCC 12472 / DSM 30191 / JCM 1249 / CCUG 213 / NBRC 12614 / NCIMB 9131 / NCTC 9757 / MK).